Consider the following 402-residue polypeptide: NADH-quinone oxidoreductase subunit D (402 aa).

Belongs to the complex I 49 kDa subunit family. In terms of assembly, NDH-1 is composed of 14 different subunits. Subunits NuoB, C, D, E, F, and G constitute the peripheral sector of the complex.

It localises to the cell inner membrane. It carries out the reaction a quinone + NADH + 5 H(+)(in) = a quinol + NAD(+) + 4 H(+)(out). Its function is as follows. NDH-1 shuttles electrons from NADH, via FMN and iron-sulfur (Fe-S) centers, to quinones in the respiratory chain. The immediate electron acceptor for the enzyme in this species is believed to be ubiquinone. Couples the redox reaction to proton translocation (for every two electrons transferred, four hydrogen ions are translocated across the cytoplasmic membrane), and thus conserves the redox energy in a proton gradient. The chain is NADH-quinone oxidoreductase subunit D from Cereibacter sphaeroides (strain ATCC 17029 / ATH 2.4.9) (Rhodobacter sphaeroides).